The primary structure comprises 500 residues: Cytochrome P450 11B2, mitochondrial (500 aa).

The transit peptide at 1–24 (MALRAKADVWLARPWQCLPRTRAL) directs the protein to the mitochondrion. Residue Phe-381 coordinates 21-hydroxyprogesterone. Position 447 (Cys-447) interacts with heme.

It belongs to the cytochrome P450 family. The cofactor is heme. Adrenal gland.

The protein localises to the mitochondrion inner membrane. The enzyme catalyses a steroid + 2 reduced [adrenodoxin] + O2 + 2 H(+) = an 11beta-hydroxysteroid + 2 oxidized [adrenodoxin] + H2O. The catalysed reaction is 21-hydroxyprogesterone + 2 reduced [adrenodoxin] + O2 + 2 H(+) = corticosterone + 2 oxidized [adrenodoxin] + H2O. It catalyses the reaction corticosterone + 2 reduced [adrenodoxin] + O2 + 2 H(+) = 18-hydroxycorticosterone + 2 oxidized [adrenodoxin] + H2O. It carries out the reaction 18-hydroxycorticosterone + 2 reduced [adrenodoxin] + O2 + 2 H(+) = aldosterone + 2 oxidized [adrenodoxin] + 2 H2O. The enzyme catalyses 11-deoxycortisol + 2 reduced [adrenodoxin] + O2 + 2 H(+) = cortisol + 2 oxidized [adrenodoxin] + H2O. The catalysed reaction is 21-hydroxyprogesterone + 2 reduced [adrenodoxin] + O2 + 2 H(+) = 18-hydroxy-11-deoxycorticosterone + 2 oxidized [adrenodoxin] + H2O. It catalyses the reaction cortisol + 2 reduced [adrenodoxin] + O2 + 2 H(+) = 18-hydroxycortisol + 2 oxidized [adrenodoxin] + H2O. It carries out the reaction 18-hydroxycortisol + 2 reduced [adrenodoxin] + O2 + 2 H(+) = 18-oxocortisol + 2 oxidized [adrenodoxin] + 2 H2O. The protein operates within steroid biosynthesis. Its function is as follows. A cytochrome P450 monooxygenase that catalyzes the biosynthesis of aldosterone, the main mineralocorticoid in the human body responsible for salt and water homeostasis, thus involved in blood pressure regulation, arterial hypertension, and the development of heart failure. Catalyzes three sequential oxidative reactions of 11-deoxycorticosterone (21-hydroxyprogesterone), namely 11-beta hydroxylation, followed by two successive oxidations at C18 yielding 18-hydroxy and then 18-oxo intermediates (that would not leave the enzyme active site during the consecutive hydroxylation reactions), ending with the formation of aldosterone. Can also produce 18-hydroxycortisol and 18-oxocortisol, derived from successive oxidations of cortisol at C18, normally found at very low levels, but significantly increased in primary aldosteronism, the most common form of secondary hypertension. Mechanistically, uses molecular oxygen inserting one oxygen atom into a substrate and reducing the second into a water molecule. Two electrons are provided by NADPH via a two-protein mitochondrial transfer system comprising flavoprotein FDXR (adrenodoxin/ferredoxin reductase) and nonheme iron-sulfur protein FDX1 or FDX2 (adrenodoxin/ferredoxin). Could also be involved in the androgen metabolic pathway. The polypeptide is Cytochrome P450 11B2, mitochondrial (CYP11B2) (Mesocricetus auratus (Golden hamster)).